Here is a 1189-residue protein sequence, read N- to C-terminus: Pesticidal crystal protein Cry1Ca (1189 aa).

It belongs to the delta endotoxin family.

Promotes colloidosmotic lysis by binding to the midgut epithelial cells of many lepidopteran larvae including Spodoptera species. The chain is Pesticidal crystal protein Cry1Ca (cry1Ca) from Bacillus thuringiensis subsp. aizawai.